We begin with the raw amino-acid sequence, 408 residues long: Lysosomal phospholipase A and acyltransferase (408 aa).

An N-terminal signal peptide occupies residues 1-31 (MGLRRGPCPAALLPGGFLFLLLLADPALLAG). D42 serves as a coordination point for substrate. A disulfide bond links C61 and C85. Residue N95 is glycosylated (N-linked (GlcNAc...) asparagine). S194 serves as the catalytic Acyl-ester intermediate. S194 contributes to the Zn(2+) binding site. M195 is a binding site for substrate. N269 and N285 each carry an N-linked (GlcNAc...) asparagine glycan. The Zn(2+) site is built by D336 and C351. Catalysis depends on charge relay system residues D356 and H388. Position 388 (H388) interacts with Zn(2+). N394 is a glycosylation site (N-linked (GlcNAc...) asparagine).

The protein belongs to the AB hydrolase superfamily. Lipase family. In terms of processing, N-glycosylated. N-glycosylation is important for maturation of the enzyme and normal subcellular location.

It localises to the secreted. Its subcellular location is the lysosome. It is found in the membrane. The enzyme catalyses a 1,2-diacyl-sn-glycero-3-phosphocholine + H2O = a 2-acyl-sn-glycero-3-phosphocholine + a fatty acid + H(+). It carries out the reaction 1-hexadecanoyl-2-(9Z-octadecenoyl)-sn-glycero-3-phosphocholine + H2O = 2-(9Z-octadecenoyl)-sn-glycero-3-phosphocholine + hexadecanoate + H(+). It catalyses the reaction 1,2-di-(9Z-octadecenoyl)-sn-glycero-3-phosphocholine + H2O = 2-(9Z-octadecenoyl)-sn-glycero-3-phosphocholine + (9Z)-octadecenoate + H(+). The catalysed reaction is 1-hexadecanoyl-2-glutaroyl-sn-glycero-3-phosphocholine + H2O = 2-glutaroyl-sn-glycero-3-phosphocholine + hexadecanoate + H(+). The enzyme catalyses 1-hexadecanoyl-2-nonadioyl-sn-glycero-3-phosphocholine + H2O = 2-nonadioyl-sn-glycero-3-phosphocholine + hexadecanoate + H(+). It carries out the reaction 1-hexadecanoyl-2-(5-oxopentanoyl)-sn-glycero-3-phosphocholine + H2O = 2-(5-oxopentanoyl)-sn-glycero-3-phosphocholine + hexadecanoate + H(+). It catalyses the reaction 1-hexadecanoyl-2-(9-oxononanoyl)-sn-glycero-3-phosphocholine + H2O = 2-(9-oxononanoyl)-sn-glycero-3-phosphocholine + hexadecanoate + H(+). The catalysed reaction is 1,2-dihexadecanoyl-sn-glycero-3-phosphocholine + H2O = 2-hexadecanoyl-sn-glycero-3-phosphocholine + hexadecanoate + H(+). The enzyme catalyses a 1,2-diacyl-sn-glycero-3-phosphocholine + H2O = a 1-acyl-sn-glycero-3-phosphocholine + a fatty acid + H(+). It carries out the reaction 1-hexadecanoyl-2-(9Z-octadecenoyl)-sn-glycero-3-phosphocholine + H2O = 1-hexadecanoyl-sn-glycero-3-phosphocholine + (9Z)-octadecenoate + H(+). It catalyses the reaction 1,2-di-(9Z-octadecenoyl)-sn-glycero-3-phosphocholine + H2O = 1-(9Z-octadecenoyl)-sn-glycero-3-phosphocholine + (9Z)-octadecenoate + H(+). The catalysed reaction is 1,2-dihexadecanoyl-sn-glycero-3-phosphocholine + H2O = 1-hexadecanoyl-sn-glycero-3-phosphocholine + hexadecanoate + H(+). The enzyme catalyses a 1-acyl-sn-glycero-3-phosphocholine + H2O = sn-glycerol 3-phosphocholine + a fatty acid + H(+). It carries out the reaction 1-hexadecanoyl-sn-glycero-3-phosphocholine + H2O = sn-glycerol 3-phosphocholine + hexadecanoate + H(+). It catalyses the reaction N-(acetyl)-sphing-4-enine + a 1,2-diacyl-sn-glycero-3-phosphoethanolamine = 1-O-acyl-N-(acetyl)-sphing-4-enine + a 2-acyl-sn-glycero-3-phosphoethanolamine. The catalysed reaction is 1-hexadecanoyl-2-(9Z-octadecenoyl)-sn-glycero-3-phosphoethanolamine + N-(acetyl)-sphing-4-enine = 2-(9Z-octadecenoyl)-sn-glycero-3-phosphoethanolamine + 1-hexadecanoyl-N-(acetyl)-sphing-4-enine. The enzyme catalyses 1-hexadecanoyl-2-(9Z,12Z-octadecadienoyl)-sn-glycero-3-phosphoethanolamine + N-(acetyl)-sphing-4-enine = 2-(9Z,12Z)-octadecadienoyl-sn-glycero-3-phosphoethanolamine + 1-hexadecanoyl-N-(acetyl)-sphing-4-enine. It carries out the reaction 1-hexadecanoyl-2-(5Z,8Z,11Z,14Z-eicosatetraenoyl)-sn-glycero-3-phosphoethanolamine + N-(acetyl)-sphing-4-enine = 2-(5Z,8Z,11Z,14Z)-eicosatetraenoyl-sn-glycero-3-phosphoethanolamine + 1-hexadecanoyl-N-(acetyl)-sphing-4-enine. It catalyses the reaction N-(acetyl)-sphing-4-enine + a 1,2-diacyl-sn-glycero-3-phosphoethanolamine = 1-O-acyl-N-(acetyl)-sphing-4-enine + a 1-acyl-sn-glycero-3-phosphoethanolamine. The catalysed reaction is 1-hexadecanoyl-2-(9Z-octadecenoyl)-sn-glycero-3-phosphoethanolamine + N-(acetyl)-sphing-4-enine = 1-(9Z-octadecenoyl)-N-(acetyl)-sphing-4-enine + 1-hexadecanoyl-sn-glycero-3-phosphoethanolamine. The enzyme catalyses 1-hexadecanoyl-2-(9Z,12Z-octadecadienoyl)-sn-glycero-3-phosphoethanolamine + N-(acetyl)-sphing-4-enine = 1-(9Z,12Z-octadecadienoyl)-N-acetylsphing-4-enine + 1-hexadecanoyl-sn-glycero-3-phosphoethanolamine. It carries out the reaction 1-hexadecanoyl-2-(5Z,8Z,11Z,14Z-eicosatetraenoyl)-sn-glycero-3-phosphoethanolamine + N-(acetyl)-sphing-4-enine = 1-(5Z,8Z,11Z,14Z)-eicosatetraenoyl-N-(acetyl)-sphing-4-enine + 1-hexadecanoyl-sn-glycero-3-phosphoethanolamine. It catalyses the reaction N-(acetyl)-sphing-4-enine + a 1,2-diacyl-sn-glycero-3-phosphocholine = 1-O-acyl-N-(acetyl)-sphing-4-enine + a 2-acyl-sn-glycero-3-phosphocholine. The catalysed reaction is 1-hexadecanoyl-2-(9Z-octadecenoyl)-sn-glycero-3-phosphocholine + N-(acetyl)-sphing-4-enine = 1-hexadecanoyl-N-(acetyl)-sphing-4-enine + 2-(9Z-octadecenoyl)-sn-glycero-3-phosphocholine. The enzyme catalyses 1-hexadecanoyl-2-(9Z,12Z-octadecadienoyl)-sn-glycero-3-phosphocholine + N-(acetyl)-sphing-4-enine = 2-(9Z,12Z-octadecadienoyl)-sn-glycero-3-phosphocholine + 1-hexadecanoyl-N-(acetyl)-sphing-4-enine. It carries out the reaction 1-hexadecanoyl-2-(5Z,8Z,11Z,14Z-eicosatetraenoyl)-sn-glycero-3-phosphocholine + N-(acetyl)-sphing-4-enine = 1-hexadecanoyl-N-(acetyl)-sphing-4-enine + 2-(5Z,8Z,11Z,14Z)-eicosatetraenoyl-sn-glycero-3-phosphocholine. It catalyses the reaction 1-hexadecanoyl-2-(4Z,7Z,10Z,13Z,16Z,19Z-docosahexaenoyl)-sn-glycero-3-phosphocholine + N-(acetyl)-sphing-4-enine = 2-(4Z,7Z,10Z,13Z,16Z,19Z-docosahexaenoyl)-sn-glycero-3-phosphocholine + 1-hexadecanoyl-N-(acetyl)-sphing-4-enine. The catalysed reaction is 1-hexadecanoyl-2-nonadioyl-sn-glycero-3-phosphocholine + N-(acetyl)-sphing-4-enine = 2-nonadioyl-sn-glycero-3-phosphocholine + 1-hexadecanoyl-N-(acetyl)-sphing-4-enine. The enzyme catalyses 1-octadecanoyl-2-(9Z-octadecenoyl)-sn-glycero-3-phosphocholine + N-(acetyl)-sphing-4-enine = 1-octadecanoyl-N-(acetyl)-sphing-4-enine + 2-(9Z-octadecenoyl)-sn-glycero-3-phosphocholine. It carries out the reaction 1-(9Z)-octadecenoyl-2-octadecanoyl-sn-glycero-3-phosphocholine + N-(acetyl)-sphing-4-enine = 2-octadecanoyl-sn-glycero-3-phosphocholine + 1-(9Z-octadecenoyl)-N-(acetyl)-sphing-4-enine. It catalyses the reaction 1-octadecanoyl-2-(5Z,8Z,11Z,14Z-eicosatetraenoyl)-sn-glycero-3-phosphocholine + N-(acetyl)-sphing-4-enine = 1-octadecanoyl-N-(acetyl)-sphing-4-enine + 2-(5Z,8Z,11Z,14Z)-eicosatetraenoyl-sn-glycero-3-phosphocholine. The catalysed reaction is 1-(9Z-octadecenoyl)-2-hexadecanoyl-sn-glycero-3-phosphocholine + N-(acetyl)-sphing-4-enine = 1-(9Z-octadecenoyl)-N-(acetyl)-sphing-4-enine + 2-hexadecanoyl-sn-glycero-3-phosphocholine. The enzyme catalyses N-(acetyl)-sphing-4-enine + a 1,2-diacyl-sn-glycero-3-phosphocholine = 1-O-acyl-N-(acetyl)-sphing-4-enine + a 1-acyl-sn-glycero-3-phosphocholine. It carries out the reaction 1-hexadecanoyl-2-(9Z-octadecenoyl)-sn-glycero-3-phosphocholine + N-(acetyl)-sphing-4-enine = 1-(9Z-octadecenoyl)-N-(acetyl)-sphing-4-enine + 1-hexadecanoyl-sn-glycero-3-phosphocholine. It catalyses the reaction 1-hexadecanoyl-2-(9Z,12Z-octadecadienoyl)-sn-glycero-3-phosphocholine + N-(acetyl)-sphing-4-enine = 1-(9Z,12Z-octadecadienoyl)-N-acetylsphing-4-enine + 1-hexadecanoyl-sn-glycero-3-phosphocholine. The catalysed reaction is 1-hexadecanoyl-2-(5Z,8Z,11Z,14Z-eicosatetraenoyl)-sn-glycero-3-phosphocholine + N-(acetyl)-sphing-4-enine = 1-(5Z,8Z,11Z,14Z)-eicosatetraenoyl-N-(acetyl)-sphing-4-enine + 1-hexadecanoyl-sn-glycero-3-phosphocholine. The enzyme catalyses 1-hexadecanoyl-2-(4Z,7Z,10Z,13Z,16Z,19Z-docosahexaenoyl)-sn-glycero-3-phosphocholine + N-(acetyl)-sphing-4-enine = 1-(4Z,7Z,10Z,13Z,16Z,19Z-docosahexaenoyl)-N-(acetyl)-sphing-4-enine + 1-hexadecanoyl-sn-glycero-3-phosphocholine. It carries out the reaction 1-octadecanoyl-2-(9Z-octadecenoyl)-sn-glycero-3-phosphocholine + N-(acetyl)-sphing-4-enine = 1-(9Z-octadecenoyl)-N-(acetyl)-sphing-4-enine + 1-octadecanoyl-sn-glycero-3-phosphocholine. It catalyses the reaction 1-octadecanoyl-2-(9Z,12Z)-octadecadienoyl-sn-glycero-3-phosphocholine + N-(acetyl)-sphing-4-enine = 1-(9Z,12Z-octadecadienoyl)-N-acetylsphing-4-enine + 1-octadecanoyl-sn-glycero-3-phosphocholine. The catalysed reaction is 1-(9Z-octadecenoyl)-2-hexadecanoyl-sn-glycero-3-phosphocholine + N-(acetyl)-sphing-4-enine = 1-hexadecanoyl-N-(acetyl)-sphing-4-enine + 1-(9Z-octadecenoyl)-sn-glycero-3-phosphocholine. The enzyme catalyses 1-(9Z)-octadecenoyl-2-octadecanoyl-sn-glycero-3-phosphocholine + N-(acetyl)-sphing-4-enine = 1-octadecanoyl-N-(acetyl)-sphing-4-enine + 1-(9Z-octadecenoyl)-sn-glycero-3-phosphocholine. It carries out the reaction 1,2-di-(9Z-octadecenoyl)-sn-glycero-3-phosphocholine + N-(acetyl)-sphing-4-enine = 1-(9Z-octadecenoyl)-N-(acetyl)-sphing-4-enine + 1-(9Z-octadecenoyl)-sn-glycero-3-phosphocholine. It catalyses the reaction 1-octadecanoyl-2-(5Z,8Z,11Z,14Z-eicosatetraenoyl)-sn-glycero-3-phosphocholine + N-(acetyl)-sphing-4-enine = 1-(5Z,8Z,11Z,14Z)-eicosatetraenoyl-N-(acetyl)-sphing-4-enine + 1-octadecanoyl-sn-glycero-3-phosphocholine. The catalysed reaction is a 1,2-diacyl-sn-glycero-3-phospho-L-serine + N-(acetyl)-sphing-4-enine = a 2-acyl-sn-glycero-3-phospho-L-serine + 1-O-acyl-N-(acetyl)-sphing-4-enine. The enzyme catalyses 1-octadecanoyl-2-(9Z-octadecenoyl)-sn-glycero-3-phospho-L-serine + N-(acetyl)-sphing-4-enine = 2-(9Z-octadecenoyl)-sn-glycero-3-phospho-L-serine + 1-octadecanoyl-N-(acetyl)-sphing-4-enine. It carries out the reaction a 1,2-diacyl-sn-glycero-3-phospho-L-serine + N-(acetyl)-sphing-4-enine = 1-O-acyl-N-(acetyl)-sphing-4-enine + a 1-acyl-sn-glycero-3-phospho-L-serine. It catalyses the reaction 1-octadecanoyl-2-(9Z-octadecenoyl)-sn-glycero-3-phospho-L-serine + N-(acetyl)-sphing-4-enine = 1-octadecanoyl-sn-glycero-3-phosphoserine + 1-(9Z-octadecenoyl)-N-(acetyl)-sphing-4-enine. The catalysed reaction is a 1,2-diacyl-sn-glycero-3-phospho-(1'-sn-glycerol) + N-(acetyl)-sphing-4-enine = 2-acyl-sn-glycero-3-phospho-(1'-sn-glycerol) + 1-O-acyl-N-(acetyl)-sphing-4-enine. The enzyme catalyses 1-octadecanoyl-2-(9Z-octadecenoyl)-sn-glycero-3-phospho-(1'-sn-glycerol) + N-(acetyl)-sphing-4-enine = 2-(9Z-octadecenoyl)-sn-glycero-3-phospho-(1'-sn-glycerol) + 1-octadecanoyl-N-(acetyl)-sphing-4-enine. It carries out the reaction a 1,2-diacyl-sn-glycero-3-phospho-(1'-sn-glycerol) + N-(acetyl)-sphing-4-enine = 1-O-acyl-N-(acetyl)-sphing-4-enine + 1-acyl-sn-glycero-3-phospho-(1'-sn-glycerol). It catalyses the reaction 1-octadecanoyl-2-(9Z-octadecenoyl)-sn-glycero-3-phospho-(1'-sn-glycerol) + N-(acetyl)-sphing-4-enine = 1-octadecanoyl-sn-glycero-3-phospho-(1'-sn-glycerol) + 1-(9Z-octadecenoyl)-N-(acetyl)-sphing-4-enine. The catalysed reaction is an N-acylethanolamine + a 1,2-diacyl-sn-glycero-3-phosphocholine = 2-(acylamino)ethyl fatty acid + a 2-acyl-sn-glycero-3-phosphocholine. The enzyme catalyses an N-acylethanolamine + a 1,2-diacyl-sn-glycero-3-phosphocholine = 2-(acylamino)ethyl fatty acid + a 1-acyl-sn-glycero-3-phosphocholine. It carries out the reaction N-(5Z,8Z,11Z,14Z-eicosatetraenoyl)-ethanolamine + 1,2-di-(9Z-octadecenoyl)-sn-glycero-3-phosphocholine = 2-[(5Z,8Z,11Z,14Z)-eicosatetraenoylamino]ethyl (9Z)-octadecenoate + (9Z-octadecenoyl)-sn-glycero-3-phosphocholine. It catalyses the reaction N-(9Z-octadecenoyl) ethanolamine + 1,2-di-(9Z-octadecenoyl)-sn-glycero-3-phosphocholine = 2-[(9Z)-octadecenoylamino]ethyl (9Z)-octadecenoate + (9Z-octadecenoyl)-sn-glycero-3-phosphocholine. The catalysed reaction is a 3-acyl-sn-glycerol + a 1,2-diacyl-sn-glycero-3-phosphocholine = a 1,3-diacylglycerol + a 1-acyl-sn-glycero-3-phosphocholine. The enzyme catalyses a 3-acyl-sn-glycerol + a 1,2-diacyl-sn-glycero-3-phosphocholine = a 1,3-diacylglycerol + a 2-acyl-sn-glycero-3-phosphocholine. It carries out the reaction 3-(9Z-octadecenoyl)-sn-glycerol + 1,2-di-(9Z-octadecenoyl)-sn-glycero-3-phosphocholine = 1,3-di-(9Z-octadecenoyl)-glycerol + (9Z-octadecenoyl)-sn-glycero-3-phosphocholine. It catalyses the reaction 3-hexadecanoyl-sn-glycerol + 1,2-di-(9Z-octadecenoyl)-sn-glycero-3-phosphocholine = 1-(9Z)-octadecenoyl-3-hexadecanoyl-sn-glycerol + (9Z-octadecenoyl)-sn-glycero-3-phosphocholine. The catalysed reaction is a 1-acyl-sn-glycerol + a 1,2-diacyl-sn-glycero-3-phosphocholine = a 1,3-diacylglycerol + a 2-acyl-sn-glycero-3-phosphocholine. The enzyme catalyses a 1-acyl-sn-glycerol + a 1,2-diacyl-sn-glycero-3-phosphocholine = a 1,3-diacylglycerol + a 1-acyl-sn-glycero-3-phosphocholine. It carries out the reaction 1-(9Z-octadecenoyl)-sn-glycerol + 1,2-di-(9Z-octadecenoyl)-sn-glycero-3-phosphocholine = 1,3-di-(9Z-octadecenoyl)-glycerol + (9Z-octadecenoyl)-sn-glycero-3-phosphocholine. It catalyses the reaction 1-hexadecanoyl-sn-glycerol + 1,2-di-(9Z-octadecenoyl)-sn-glycero-3-phosphocholine = 1-hexadecanoyl-3-(9Z)-octadecenoyl-sn-glycerol + (9Z-octadecenoyl)-sn-glycero-3-phosphocholine. The catalysed reaction is a 2-acylglycerol + a 1,2-diacyl-sn-glycero-3-phosphocholine = a 1,2-diacylglycerol + a 2-acyl-sn-glycero-3-phosphocholine. The enzyme catalyses a 2-acylglycerol + a 1,2-diacyl-sn-glycero-3-phosphocholine = a 1,2-diacylglycerol + a 1-acyl-sn-glycero-3-phosphocholine. It carries out the reaction 2-hexadecanoylglycerol + 1,2-di-(9Z-octadecenoyl)-sn-glycero-3-phosphocholine = 1-(9Z)-octadecenoyl-2-hexadecanoylglycerol + (9Z-octadecenoyl)-sn-glycero-3-phosphocholine. It catalyses the reaction 1-O-alkylglycerol + a 1,2-diacyl-sn-glycero-3-phosphocholine = 1-O-alkyl-3-acylglycerol + a 1-acyl-sn-glycero-3-phosphocholine. The catalysed reaction is 1-O-alkylglycerol + a 1,2-diacyl-sn-glycero-3-phosphocholine = 1-O-alkyl-3-acylglycerol + a 2-acyl-sn-glycero-3-phosphocholine. The enzyme catalyses 1-O-hexadecylglycerol + 1,2-di-(9Z-octadecenoyl)-sn-glycero-3-phosphocholine = 1-O-hexadecyl-3-(9Z)-octadecenoylglycerol + (9Z-octadecenoyl)-sn-glycero-3-phosphocholine. It carries out the reaction 1-O-alkyl-2-acyl-sn-glycerol + a 1,2-diacyl-sn-glycero-3-phosphocholine = 1-O-alkyl-2,3-diacyl-sn-glycerol + a 2-acyl-sn-glycero-3-phosphocholine. It catalyses the reaction 1-O-alkyl-2-acyl-sn-glycerol + a 1,2-diacyl-sn-glycero-3-phosphocholine = 1-O-alkyl-2,3-diacyl-sn-glycerol + a 1-acyl-sn-glycero-3-phosphocholine. The catalysed reaction is 1-O-hexadecyl-2-acetyl-sn-glycerol + 1,2-di-(9Z-octadecenoyl)-sn-glycero-3-phosphocholine = 1-O-hexadecyl-2-acetyl-3-(9Z)-octadecenoyl-sn-glycerol + (9Z-octadecenoyl)-sn-glycero-3-phosphocholine. The enzyme catalyses 1-O-hexadecyl-2-O-methyl-sn-glycerol + 1,2-di-(9Z-octadecenoyl)-sn-glycero-3-phosphocholine = 1-O-hexadecyl-2-O-methyl-3-(9Z)-octadecenoyl-sn-glycerol + (9Z-octadecenoyl)-sn-glycero-3-phosphocholine. It carries out the reaction a 1,2-diacyl-sn-glycero-3-phosphoethanolamine + H2O = a 1-acyl-sn-glycero-3-phosphoethanolamine + a fatty acid + H(+). It catalyses the reaction 1-acyl-2-(5Z,8Z,11Z,14Z)-eicosatetraenoyl-sn-glycero-3-phosphoethanolamine + H2O = a 1-acyl-sn-glycero-3-phosphoethanolamine + (5Z,8Z,11Z,14Z)-eicosatetraenoate + H(+). The catalysed reaction is a 1,2-diacyl-sn-glycero-3-phospho-(1'-sn-glycerol) + H2O = 1-acyl-sn-glycero-3-phospho-(1'-sn-glycerol) + a fatty acid + H(+). The enzyme catalyses 1-hexadecanoyl-2-(9Z-octadecenoyl)-sn-glycero-3-phospho-(1'-sn-glycerol) + H2O = 1-hexadecanoyl-sn-glycero-3-phospho-(1'-sn-glycerol) + (9Z)-octadecenoate + H(+). It carries out the reaction a 1,2-diacyl-sn-glycero-3-phospho-(1'-sn-glycerol) + H2O = 2-acyl-sn-glycero-3-phospho-(1'-sn-glycerol) + a fatty acid + H(+). It catalyses the reaction 1-hexadecanoyl-2-(9Z-octadecenoyl)-sn-glycero-3-phospho-(1'-sn-glycerol) + H2O = 2-(9Z-octadecenoyl)-sn-glycero-3-phospho-(1'-sn-glycerol) + hexadecanoate + H(+). Has dual calcium-independent phospholipase and O-acyltransferase activities with a potential role in glycerophospholipid homeostasis and remodeling of acyl groups of lipophilic alcohols present in acidic cellular compartments. Catalyzes hydrolysis of the ester bond of the fatty acyl group attached at sn-1 or sn-2 position of phospholipids (phospholipase A1 or A2 activity) and transfer it to the hydroxyl group at the first carbon of lipophilic alcohols (O-acyltransferase activity). Among preferred fatty acyl donors are phosphatidylcholines, phosphatidylethanolamines, phosphatidylglycerols and phosphatidylserines. Favors sn-2 over sn-1 deacylation of unsaturated fatty acyl groups of phosphatidylcholines, phosphatidylethanolamines, and phosphatidylglycerols. Among preferred fatty acyl acceptors are natural lipophilic alcohols including short-chain ceramide N-acetyl-sphingosine (C2 ceramide), alkylacylglycerols, monoacylglycerols, and acylethanolamides such as anandamide and oleoylethanolamide. Selectively hydrolyzes the sn-1 fatty acyl group of truncated oxidized phospholipids and may play a role in detoxification of reactive oxidized phospholipids during oxidative stress. Required for normal phospholipid degradation in alveolar macrophages with potential implications in the clearance of pulmonary surfactant, which is mainly composed of dipalmitoylphosphatidylcholine (1,2-dihexadecanoyl-sn-glycero-3-phosphocholine). Involved in the first step of bis(monoacylglycero)phosphate (BMP) de novo synthesis from phosphatidylglycerol (1,2-diacyl-sn-glycero-3-phospho-(1'-sn-glycerol), PG). BMP is an important player in cargo sorting and degradation, regulation of cellular cholesterol levels and intercellular communication. At neutral pH, hydrolyzes the sn-1 fatty acyl group of the lysophosphatidylcholines. The polypeptide is Lysosomal phospholipase A and acyltransferase (PLA2G15) (Canis lupus familiaris (Dog)).